The following is an 85-amino-acid chain: MATPLSPFSWLAIGIVKLYQWFISPLIGPRCRFTPTCSTYAIEALRAHGFIKGCWLSTKRLLKCHPLNEGGFDPVPPVQKQDRDK.

This sequence belongs to the UPF0161 family.

It localises to the cell inner membrane. Functionally, could be involved in insertion of integral membrane proteins into the membrane. This chain is Putative membrane protein insertion efficiency factor, found in Vibrio cholerae serotype O1 (strain ATCC 39315 / El Tor Inaba N16961).